Here is a 252-residue protein sequence, read N- to C-terminus: Phosphate import ATP-binding protein PstB 1 (252 aa).

One can recognise an ABC transporter domain in the interval L6–I247. Residue G38–S45 coordinates ATP.

The protein belongs to the ABC transporter superfamily. Phosphate importer (TC 3.A.1.7) family. The complex is composed of two ATP-binding proteins (PstB), two transmembrane proteins (PstC and PstA) and a solute-binding protein (PstS).

It localises to the cell membrane. It catalyses the reaction phosphate(out) + ATP + H2O = ADP + 2 phosphate(in) + H(+). In terms of biological role, part of the ABC transporter complex PstSACB involved in phosphate import. Responsible for energy coupling to the transport system. The sequence is that of Phosphate import ATP-binding protein PstB 1 from Streptococcus pneumoniae (strain ATCC BAA-255 / R6).